Reading from the N-terminus, the 419-residue chain is Transcription termination factor Rho (419 aa).

One can recognise a Rho RNA-BD domain in the interval 48–123 (EISGDGVLEI…LKVDTINFDR (76 aa)). RNA-binding stretches follow at residues 61–66 (GFGFLR), 78–80 (DIY), and 108–110 (ERY). ATP contacts are provided by residues 169–174 (GKGQRG), 181–186 (KAGKTI), and R212. The tract at residues 284-288 (VLTGG) is RNA-binding 2.

The protein belongs to the Rho family. As to quaternary structure, homohexamer. The homohexamer assembles into an open ring structure.

In terms of biological role, facilitates transcription termination by a mechanism that involves Rho binding to the nascent RNA, activation of Rho's RNA-dependent ATPase activity, and release of the mRNA from the DNA template. This chain is Transcription termination factor Rho, found in Pseudomonas fluorescens biotype C.